The chain runs to 243 residues: PF03932 family protein CutC (243 aa).

The protein belongs to the CutC family.

It localises to the cytoplasm. The sequence is that of PF03932 family protein CutC from Glaesserella parasuis serovar 5 (strain SH0165) (Haemophilus parasuis).